We begin with the raw amino-acid sequence, 226 residues long: MKRLAVSILCLALAGCAIEKAEVRTPSFDEQLPAPQPSYASGSIWQAASAGIAEDHKARRKGDIITVVIVENASASKQATTDTDRKASISASIPYLMGLEKQKLILGKLTGADLGNLLGASTDSTFGGSGATTRKENLVATMSAKIIDVLPNGNFLIEGRRNVKVNNEDQIIILQGTVRPRDVSPDNTVNSSLIADARITYTGEGVISDRQRPGWLMNFLDYIWPF.

The first 15 residues, 1 to 15 (MKRLAVSILCLALAG), serve as a signal peptide directing secretion. Cysteine 16 is lipidated: N-palmitoyl cysteine. The S-diacylglycerol cysteine moiety is linked to residue cysteine 16.

This sequence belongs to the FlgH family. As to quaternary structure, the basal body constitutes a major portion of the flagellar organelle and consists of four rings (L,P,S, and M) mounted on a central rod.

Its subcellular location is the cell outer membrane. It is found in the bacterial flagellum basal body. In terms of biological role, assembles around the rod to form the L-ring and probably protects the motor/basal body from shearing forces during rotation. This chain is Flagellar L-ring protein, found in Geobacter metallireducens (strain ATCC 53774 / DSM 7210 / GS-15).